The following is a 2570-amino-acid chain: Highly reducing polyketide synthase tstA (2570 aa).

Residues 16–443 (AMPIAVVGIG…GANAHVVLEN (428 aa)) form the Ketosynthase family 3 (KS3) domain. Residues C191, H326, and H366 each act as for beta-ketoacyl synthase activity in the active site. Residues 458 to 478 (HTRKSATESSGTSTPSNPGPH) are disordered. Residues 464–478 (TESSGTSTPSNPGPH) show a composition bias toward low complexity. In terms of domain architecture, Malonyl-CoA:ACP transacylase (MAT) spans 567–898 (FVFTGQGAQW…YSALVRNKNA (332 aa)). Positions 965-1103 (TDLLGVLERN…GLVSVVAPQK (139 aa)) are N-terminal hotdog fold. A PKS/mFAS DH domain is found at 965–1293 (TDLLGVLERN…CATLAREGAD (329 aa)). H997 functions as the Proton acceptor; for dehydratase activity in the catalytic mechanism. Positions 1133–1293 (RRNINVPQFY…CATLAREGAD (161 aa)) are C-terminal hotdog fold. Residue D1198 is the Proton donor; for dehydratase activity of the active site. Residues 1343–1645 (LERAAYYMLK…IATSINSNNY (303 aa)) form a methyltransferase (CMeT) domain region. Residues 1866–2178 (GLLDSIFWTD…TGGHMGKLVG (313 aa)) enclose the Enoyl reductase (ER) domain. Residues 2202-2379 (ASYVLIGGLG…ATTIDLGAIS (178 aa)) enclose the Ketoreductase (KR) domain. One can recognise a Carrier domain in the interval 2482 to 2559 (DASELILGAL…HLATKIAQRS (78 aa)). S2519 is subject to O-(pantetheine 4'-phosphoryl)serine.

It depends on pantetheine 4'-phosphate as a cofactor.

It participates in secondary metabolite biosynthesis. Highly reducing polyketide synthase; part of the gene cluster that mediates the biosynthesis of the antihypercholesterolemic agents phomoidrides which are dimeric anhydrides. The pathway begins with the highly reducing polyketide synthase tstA that catalyzes the formation of a C12-fatty acyl-ACP, starting from one acetate and 5 malonate units. The hydrolase tstM is involved in the release of the C12-fatty acyl chain from tstA. The alkylcitrate synthase (ACS) tstJ and the alkylcitrate dehydratase (ACDH) tstI then give rise to decarboxylated monomeric anhydrides by coupling the C12-fatty acyl chain with oxalacetic acid. The cyclase tstC is responsible for the dimerization of the monomeric anhydrides which leads to the production of prephomoidride that contains the characteristic bicyclo[4.3.1]deca-1,6-diene system of phomoidrides. Iterative oxidation catalyzed by the alpha-ketoglutarate-dependent dioxygenase tstK produced then phomoidride A. Finally, the methyltransferase tstE converts phomoidride A to phomoidride B via an acetalization reaction. The phosphatidylethanolamine-binding protein tstB and tstN are not essential for dimerization and their functions have still to be determined. This Talaromyces stipitatus (strain ATCC 10500 / CBS 375.48 / QM 6759 / NRRL 1006) (Penicillium stipitatum) protein is Highly reducing polyketide synthase tstA.